Reading from the N-terminus, the 204-residue chain is Imidazole glycerol phosphate synthase subunit HisH 1 (204 aa).

The Glutamine amidotransferase type-1 domain maps to 5–204; that stretch reads KVVIIDTGCA…AKLIQNFLEL (200 aa). The active-site Nucleophile is C80. Active-site residues include H186 and E188.

As to quaternary structure, heterodimer of HisH and HisF.

The protein resides in the cytoplasm. The enzyme catalyses 5-[(5-phospho-1-deoxy-D-ribulos-1-ylimino)methylamino]-1-(5-phospho-beta-D-ribosyl)imidazole-4-carboxamide + L-glutamine = D-erythro-1-(imidazol-4-yl)glycerol 3-phosphate + 5-amino-1-(5-phospho-beta-D-ribosyl)imidazole-4-carboxamide + L-glutamate + H(+). The catalysed reaction is L-glutamine + H2O = L-glutamate + NH4(+). It participates in amino-acid biosynthesis; L-histidine biosynthesis; L-histidine from 5-phospho-alpha-D-ribose 1-diphosphate: step 5/9. In terms of biological role, IGPS catalyzes the conversion of PRFAR and glutamine to IGP, AICAR and glutamate. The HisH subunit provides the glutamine amidotransferase activity that produces the ammonia necessary to HisF for the synthesis of IGP and AICAR. This is Imidazole glycerol phosphate synthase subunit HisH 1 (hisH1) from Vibrio vulnificus (strain YJ016).